The chain runs to 156 residues: Small ribosomal subunit protein uS7 (156 aa).

This sequence belongs to the universal ribosomal protein uS7 family. In terms of assembly, part of the 30S ribosomal subunit. Contacts proteins S9 and S11.

Its function is as follows. One of the primary rRNA binding proteins, it binds directly to 16S rRNA where it nucleates assembly of the head domain of the 30S subunit. Is located at the subunit interface close to the decoding center, probably blocks exit of the E-site tRNA. This Cellvibrio japonicus (strain Ueda107) (Pseudomonas fluorescens subsp. cellulosa) protein is Small ribosomal subunit protein uS7.